Reading from the N-terminus, the 562-residue chain is Transmembrane E3 ubiquitin-protein ligase FLY1 (562 aa).

The first 32 residues, 1-32 (MKKREHLGLGFFEWQIILWLSIWLAISQQALG), serve as a signal peptide directing secretion. Residues 33-262 (LRPIREKPRS…TSVNVEVYYN (230 aa)) are Lumenal-facing. The chain crosses the membrane as a helical span at residues 263–283 (KAVNYTLMVTFVSFLQVLLLI). The Cytoplasmic segment spans residues 284-297 (RQMEHGNTQSGAAK). The chain crosses the membrane as a helical span at residues 298–318 (VSIVMIGQQAIMDAYLCLLHL). At 319–321 (TAG) the chain is on the lumenal side. Residues 322–342 (ILVESLFNAFATAAFFKFVVF) form a helical membrane-spanning segment. Residues 343–373 (SIFEMRYLLAIWKATRPSNSGEGWETMRREL) lie on the Cytoplasmic side of the membrane. Residues 374-394 (SFLYSRFYGILLGGILIMYQF) traverse the membrane as a helical segment. The Lumenal segment spans residues 395–397 (HNY). The chain crosses the membrane as a helical span at residues 398-418 (MQPILLLMYSFWIPQIVANVV). Residues 419 to 426 (RDSRKPLH) lie on the Cytoplasmic side of the membrane. The chain crosses the membrane as a helical span at residues 427–447 (PYYILGMTATRLAIPLYVFGC). The Lumenal portion of the chain corresponds to 448-458 (PHNFMRVEPNK). Residues 459–479 (VWCICLCTFMGLQAVILLLQH) form a helical membrane-spanning segment. The Cytoplasmic segment spans residues 480–562 (YFGSRCFVPR…PTCRRSLPPA (83 aa)). An RING-type; atypical zinc finger spans residues 512 to 556 (CVICMTAIDLRQHTSDCMVTPCEHFFHSGCLQRWMDIKMECPTCR).

In terms of tissue distribution, highly expressed in stems. Expressed in root xylem and seed coat.

It localises to the endomembrane system. It catalyses the reaction S-ubiquitinyl-[E2 ubiquitin-conjugating enzyme]-L-cysteine + [acceptor protein]-L-lysine = [E2 ubiquitin-conjugating enzyme]-L-cysteine + N(6)-ubiquitinyl-[acceptor protein]-L-lysine.. Its pathway is protein modification; protein ubiquitination. Its function is as follows. E3 ubiquitin-protein ligase that regulates the degree of methylesterification of pectin in seed mucilage. May be involved in the recycling of pectin methylesterase enzymes in the endomembrane system of seed coat epidermal cells. Possesses E3 ubiquitin-protein ligase activity in vitro when associated with the E1 enzyme UBA1 and the E2 enzyme UBC8. May be involved in xylem development. The chain is Transmembrane E3 ubiquitin-protein ligase FLY1 from Arabidopsis thaliana (Mouse-ear cress).